The following is a 142-amino-acid chain: Hemoglobin subunit alpha-A (142 aa).

Residues 2 to 142 (VLSAADKTNV…VGTVLTAKYR (141 aa)) enclose the Globin domain. Residue His59 participates in O2 binding. Residue His88 coordinates heme b.

It belongs to the globin family. As to quaternary structure, heterotetramer of two alpha chains and two beta chains. As to expression, red blood cells.

Functionally, involved in oxygen transport from the lung to the various peripheral tissues. The polypeptide is Hemoglobin subunit alpha-A (HBAA) (Anser anser anser (Western greylag goose)).